The following is a 757-amino-acid chain: Glutathione biosynthesis bifunctional protein GshAB (757 aa).

A glutamate--cysteine ligase region spans residues 1 to 337; that stretch reads MNIQQIVKEK…LGRARLGEVA (337 aa). Positions 494-757 constitute an ATP-grasp domain; it reads KKVLAKAGFN…VLGMLFPELV (264 aa). Position 521-580 (521-580) interacts with ATP; that stretch reads PLFEGKAVVIKPKSTNFGLGISIFQQGVHDKADFAKAVEIAFREDKEVMVEDYLVGTEYR. Residues D702, E723, and N725 each contribute to the Mg(2+) site. Residues D702, E723, and N725 each coordinate Mn(2+).

This sequence in the N-terminal section; belongs to the glutamate--cysteine ligase type 1 family. Type 2 subfamily. In terms of assembly, monomer. Requires Mg(2+) as cofactor. It depends on Mn(2+) as a cofactor.

The enzyme catalyses L-cysteine + L-glutamate + ATP = gamma-L-glutamyl-L-cysteine + ADP + phosphate + H(+). It catalyses the reaction gamma-L-glutamyl-L-cysteine + glycine + ATP = glutathione + ADP + phosphate + H(+). It functions in the pathway sulfur metabolism; glutathione biosynthesis; glutathione from L-cysteine and L-glutamate: step 1/2. It participates in sulfur metabolism; glutathione biosynthesis; glutathione from L-cysteine and L-glutamate: step 2/2. Synthesizes glutathione from L-glutamate and L-cysteine via gamma-L-glutamyl-L-cysteine. In Mannheimia succiniciproducens (strain KCTC 0769BP / MBEL55E), this protein is Glutathione biosynthesis bifunctional protein GshAB.